Consider the following 110-residue polypeptide: UPF0122 protein RBAM_015800 (110 aa).

It belongs to the UPF0122 family.

Functionally, might take part in the signal recognition particle (SRP) pathway. This is inferred from the conservation of its genetic proximity to ftsY/ffh. May be a regulatory protein. The chain is UPF0122 protein RBAM_015800 from Bacillus velezensis (strain DSM 23117 / BGSC 10A6 / LMG 26770 / FZB42) (Bacillus amyloliquefaciens subsp. plantarum).